A 136-amino-acid polypeptide reads, in one-letter code: Large ribosomal subunit protein uL22 (136 aa).

Belongs to the universal ribosomal protein uL22 family. In terms of assembly, part of the 50S ribosomal subunit.

This protein binds specifically to 23S rRNA; its binding is stimulated by other ribosomal proteins, e.g. L4, L17, and L20. It is important during the early stages of 50S assembly. It makes multiple contacts with different domains of the 23S rRNA in the assembled 50S subunit and ribosome. Functionally, the globular domain of the protein is located near the polypeptide exit tunnel on the outside of the subunit, while an extended beta-hairpin is found that lines the wall of the exit tunnel in the center of the 70S ribosome. In Leifsonia xyli subsp. xyli (strain CTCB07), this protein is Large ribosomal subunit protein uL22.